Here is an 827-residue protein sequence, read N- to C-terminus: Lon protease 2 (827 aa).

The segment at 1 to 22 is disordered; it reads MSDEKKKGSAASAMPTAMAPPG. The span at 9-21 shows a compositional bias: low complexity; the sequence is SAASAMPTAMAPP. In terms of domain architecture, Lon N-terminal spans 33–227; sequence LPILPLRNSV…LVLELLNRKR (195 aa). An ATP-binding site is contributed by 379–386; that stretch reads GPPGVGKT. A Lon proteolytic domain is found at 615-796; that stretch reads TEVPGVATGL…DDVLKAALET (182 aa). Residues serine 702 and lysine 745 contribute to the active site. Positions 799–827 are disordered; it reads VGVAGTPGGEPGKEAPLPKPAESAPEVRA.

It belongs to the peptidase S16 family. In terms of assembly, homohexamer. Organized in a ring with a central cavity.

The protein resides in the cytoplasm. The catalysed reaction is Hydrolysis of proteins in presence of ATP.. Functionally, ATP-dependent serine protease that mediates the selective degradation of mutant and abnormal proteins as well as certain short-lived regulatory proteins. Required for cellular homeostasis and for survival from DNA damage and developmental changes induced by stress. Degrades polypeptides processively to yield small peptide fragments that are 5 to 10 amino acids long. Binds to DNA in a double-stranded, site-specific manner. The sequence is that of Lon protease 2 from Myxococcus xanthus.